The sequence spans 423 residues: G-protein coupled receptor 83 (423 aa).

Positions 1 to 16 (MVPHLLLLCLLPLVRA) are cleaved as a signal peptide. At 18 to 71 (EPHEGRADEQSAEAALAVPNASHFFSWNNYTFSDWQNFVGRRRYGAESQNPTVK) the chain is on the extracellular side. N-linked (GlcNAc...) asparagine glycans are attached at residues asparagine 37 and asparagine 46. A helical membrane pass occupies residues 72–92 (ALLIVAYSFIIVFSLFGNVLV). At 93-107 (CHVIFKNQRMHSATS) the chain is on the cytoplasmic side. A helical membrane pass occupies residues 108 to 129 (LFIVNLAVADIMITLLNTPFTL). The Extracellular segment spans residues 130-145 (VRFVNSTWIFGKGMCH). Asparagine 134 is a glycosylation site (N-linked (GlcNAc...) asparagine). Cysteines 144 and 224 form a disulfide. Residues 146 to 167 (VSRFAQYCSLHVSALTLTAIAV) traverse the membrane as a helical segment. Residues 168-186 (DRHQVIMHPLKPRISITKG) are Cytoplasmic-facing. A helical membrane pass occupies residues 187-208 (VIYIAVIWTMATFFSLPHAICQ). The Extracellular segment spans residues 209 to 238 (KLFTFKYSEDIVRSLCLPDFPEPADLFWKY). A helical transmembrane segment spans residues 239 to 260 (LDLATFILLYILPLLIISVAYA). Over 261–293 (RVAKKLWLCNMIGDVTTEQYFALRRKKKKTIKM) the chain is Cytoplasmic. A helical membrane pass occupies residues 294–315 (LMLVVVLFALCWFPLNCYVLLL). Topologically, residues 316–327 (SSKVIRTNNALY) are extracellular. Residues 328–348 (FAFHWFAMSSTCYNPFIYCWL) form a helical membrane-spanning segment. Residues 349–423 (NENFRIELKA…SSVEPIVTMS (75 aa)) lie on the Cytoplasmic side of the membrane. The segment covering 402 to 414 (PTSQLQSGKTDLS) has biased composition (polar residues). A disordered region spans residues 402–423 (PTSQLQSGKTDLSSVEPIVTMS).

It belongs to the G-protein coupled receptor 1 family. Highly expressed in the brain and spinal cord, and found in lower concentrations in the thymus and other tissues.

Its subcellular location is the cell membrane. G-protein coupled receptor for PEN, a neuropeptide produced from the precursor protein, proSAAS (encoded by PCSK1N). Acts through a G(i)- and G(q)-alpha-alpha-mediated pathway in response to PEN. Plays a role in food intake and body weight regulation. May contribute to the regulation of anxiety-related behaviors. The chain is G-protein coupled receptor 83 from Homo sapiens (Human).